Reading from the N-terminus, the 45-residue chain is Mu-conotoxin-like Cal 12.1.2c (45 aa).

Cystine bridges form between Cys3–Cys16, Cys11–Cys28, Cys18–Cys33, and Cys27–Cys39. 4-hydroxyproline is present on Pro23. 6'-bromotryptophan is present on residues Trp37 and Trp38. 4-hydroxyproline is present on Pro40. A 6'-bromotryptophan modification is found at Trp44.

Expressed by the venom duct.

It localises to the secreted. Its function is as follows. Mu-conotoxins block voltage-gated sodium channels. This toxin reversibly blocks voltage-gated sodium channel in cephalopods, with no alteration in the voltage dependence of sodium conductance or on the kinetics of inactivation. The chain is Mu-conotoxin-like Cal 12.1.2c from Californiconus californicus (California cone).